We begin with the raw amino-acid sequence, 286 residues long: 4-hydroxy-3-methylbut-2-enyl diphosphate reductase (286 aa).

Residue cysteine 12 participates in [4Fe-4S] cluster binding. The (2E)-4-hydroxy-3-methylbut-2-enyl diphosphate site is built by histidine 47 and histidine 80. Dimethylallyl diphosphate-binding residues include histidine 47 and histidine 80. 2 residues coordinate isopentenyl diphosphate: histidine 47 and histidine 80. Position 102 (cysteine 102) interacts with [4Fe-4S] cluster. Histidine 130 serves as a coordination point for (2E)-4-hydroxy-3-methylbut-2-enyl diphosphate. Histidine 130 is a dimethylallyl diphosphate binding site. Position 130 (histidine 130) interacts with isopentenyl diphosphate. Catalysis depends on glutamate 132, which acts as the Proton donor. Threonine 170 provides a ligand contact to (2E)-4-hydroxy-3-methylbut-2-enyl diphosphate. Position 198 (cysteine 198) interacts with [4Fe-4S] cluster. Residues serine 226, asparagine 228, and serine 270 each coordinate (2E)-4-hydroxy-3-methylbut-2-enyl diphosphate. Dimethylallyl diphosphate-binding residues include serine 226, asparagine 228, and serine 270. Isopentenyl diphosphate contacts are provided by serine 226, asparagine 228, and serine 270.

It belongs to the IspH family. [4Fe-4S] cluster is required as a cofactor.

It carries out the reaction isopentenyl diphosphate + 2 oxidized [2Fe-2S]-[ferredoxin] + H2O = (2E)-4-hydroxy-3-methylbut-2-enyl diphosphate + 2 reduced [2Fe-2S]-[ferredoxin] + 2 H(+). It catalyses the reaction dimethylallyl diphosphate + 2 oxidized [2Fe-2S]-[ferredoxin] + H2O = (2E)-4-hydroxy-3-methylbut-2-enyl diphosphate + 2 reduced [2Fe-2S]-[ferredoxin] + 2 H(+). Its pathway is isoprenoid biosynthesis; dimethylallyl diphosphate biosynthesis; dimethylallyl diphosphate from (2E)-4-hydroxy-3-methylbutenyl diphosphate: step 1/1. It functions in the pathway isoprenoid biosynthesis; isopentenyl diphosphate biosynthesis via DXP pathway; isopentenyl diphosphate from 1-deoxy-D-xylulose 5-phosphate: step 6/6. In terms of biological role, catalyzes the conversion of 1-hydroxy-2-methyl-2-(E)-butenyl 4-diphosphate (HMBPP) into a mixture of isopentenyl diphosphate (IPP) and dimethylallyl diphosphate (DMAPP). Acts in the terminal step of the DOXP/MEP pathway for isoprenoid precursor biosynthesis. The protein is 4-hydroxy-3-methylbut-2-enyl diphosphate reductase of Desulfovibrio desulfuricans (strain ATCC 27774 / DSM 6949 / MB).